The chain runs to 101 residues: Large ribosomal subunit protein bL21 (101 aa).

Belongs to the bacterial ribosomal protein bL21 family. In terms of assembly, part of the 50S ribosomal subunit. Contacts protein L20.

In terms of biological role, this protein binds to 23S rRNA in the presence of protein L20. The sequence is that of Large ribosomal subunit protein bL21 from Beutenbergia cavernae (strain ATCC BAA-8 / DSM 12333 / CCUG 43141 / JCM 11478 / NBRC 16432 / NCIMB 13614 / HKI 0122).